A 489-amino-acid chain; its full sequence is Argininosuccinate lyase (489 aa).

A disordered region spans residues 1–20 (MSEPSAAVGQRPGGESAPAH).

Belongs to the lyase 1 family. Argininosuccinate lyase subfamily.

It localises to the cytoplasm. It carries out the reaction 2-(N(omega)-L-arginino)succinate = fumarate + L-arginine. It functions in the pathway amino-acid biosynthesis; L-arginine biosynthesis; L-arginine from L-ornithine and carbamoyl phosphate: step 3/3. The protein is Argininosuccinate lyase of Acidothermus cellulolyticus (strain ATCC 43068 / DSM 8971 / 11B).